Consider the following 231-residue polypeptide: MTQDELKQLVGQAAADYVNANVPEGSVIGVGTGSTANCFIDALAAGKTRYRGAVSSSLATTARLQSHGFKVLDLNEIDSLPVYVDGADEIDHSGAMIKGGGGALTREKIVASVSDVFVCIADASKLVETLGSFPLPIEVVPMARTSIGRRVTALGGVPVVRVTKEGVPFITDNGNEIIDVKGLRISDPRTLETHVNAWPGVVTVGLFASRGADLCLLGTDTGVDTIRFSKG.

Residues 32–35 (TGST), 85–88 (DGAD), and 98–101 (KGGG) each bind substrate. E107 acts as the Proton acceptor in catalysis. Position 125 (K125) interacts with substrate.

Belongs to the ribose 5-phosphate isomerase family. As to quaternary structure, homodimer.

It catalyses the reaction aldehydo-D-ribose 5-phosphate = D-ribulose 5-phosphate. The protein operates within carbohydrate degradation; pentose phosphate pathway; D-ribose 5-phosphate from D-ribulose 5-phosphate (non-oxidative stage): step 1/1. Catalyzes the reversible conversion of ribose-5-phosphate to ribulose 5-phosphate. The chain is Ribose-5-phosphate isomerase A from Paraburkholderia xenovorans (strain LB400).